The sequence spans 160 residues: Ribosomal RNA large subunit methyltransferase H (160 aa).

S-adenosyl-L-methionine-binding residues include L76 and G108.

The protein belongs to the RNA methyltransferase RlmH family. In terms of assembly, homodimer.

Its subcellular location is the cytoplasm. The enzyme catalyses pseudouridine(1915) in 23S rRNA + S-adenosyl-L-methionine = N(3)-methylpseudouridine(1915) in 23S rRNA + S-adenosyl-L-homocysteine + H(+). Its function is as follows. Specifically methylates the pseudouridine at position 1915 (m3Psi1915) in 23S rRNA. This is Ribosomal RNA large subunit methyltransferase H from Xanthobacter autotrophicus (strain ATCC BAA-1158 / Py2).